The following is a 101-amino-acid chain: NAD(P)H-quinone oxidoreductase subunit 4L, chloroplastic (101 aa).

A run of 3 helical transmembrane segments spans residues 2–22 (MLEH…YGLI), 32–52 (MCLE…SDFF), and 61–81 (IFSI…LAIV).

This sequence belongs to the complex I subunit 4L family. In terms of assembly, NDH is composed of at least 16 different subunits, 5 of which are encoded in the nucleus.

It is found in the plastid. Its subcellular location is the chloroplast thylakoid membrane. It catalyses the reaction a plastoquinone + NADH + (n+1) H(+)(in) = a plastoquinol + NAD(+) + n H(+)(out). It carries out the reaction a plastoquinone + NADPH + (n+1) H(+)(in) = a plastoquinol + NADP(+) + n H(+)(out). Its function is as follows. NDH shuttles electrons from NAD(P)H:plastoquinone, via FMN and iron-sulfur (Fe-S) centers, to quinones in the photosynthetic chain and possibly in a chloroplast respiratory chain. The immediate electron acceptor for the enzyme in this species is believed to be plastoquinone. Couples the redox reaction to proton translocation, and thus conserves the redox energy in a proton gradient. The protein is NAD(P)H-quinone oxidoreductase subunit 4L, chloroplastic of Daucus carota (Wild carrot).